The primary structure comprises 412 residues: Eukaryotic initiation factor 4A-2 (412 aa).

Alanine 2 carries the post-translational modification N-acetylalanine. Residues 39 to 67 (ESFDAMGLQENLLRGIYAYGFEKPSAIQQ) carry the Q motif motif. The region spanning 70-240 (IVPFCKGLDV…RKFMSKPVRI (171 aa)) is the Helicase ATP-binding domain. Residue 83-90 (AQSGTGKT) participates in ATP binding. At threonine 145 the chain carries Phosphothreonine. The DEAD box signature appears at 188–191 (DEAD). The Helicase C-terminal domain occupies 251–412 (GIKQFYVNVE…ELPSNVADLL (162 aa)).

It belongs to the DEAD box helicase family. eIF4A subfamily. EIF4F is a multi-subunit complex, the composition of which varies with external and internal environmental conditions. It is composed of at least EIF4A, EIF4E and EIF4G. In terms of tissue distribution, ubiquitous. Preferentially expressed in flowers, young leaves and roots.

It localises to the cytoplasm. It catalyses the reaction ATP + H2O = ADP + phosphate + H(+). ATP-dependent RNA helicase which is a subunit of the eIF4F complex involved in cap recognition and is required for mRNA binding to ribosome. In the current model of translation initiation, eIF4A unwinds RNA secondary structures in the 5'-UTR of mRNAs which is necessary to allow efficient binding of the small ribosomal subunit, and subsequent scanning for the initiator codon. The polypeptide is Eukaryotic initiation factor 4A-2 (TIF4A-2) (Arabidopsis thaliana (Mouse-ear cress)).